The chain runs to 418 residues: Putative ion-transport protein YfeO (418 aa).

12 consecutive transmembrane segments (helical) span residues 10-30 (LLLS…LIVV), 54-74 (DSPL…GLVI), 99-119 (ALPG…SLGP), 120-140 (EHPI…RLLP), 149-169 (ILAS…AALI), 186-206 (LFAP…FFHP), 223-243 (ILSG…AVWC), 258-278 (VLVL…GGPV), 300-320 (DYFL…ASGF), 322-342 (GGRI…LHEH), 343-363 (VPAV…VLVV), and 371-391 (LFMA…CIVM).

The protein belongs to the chloride channel (TC 2.A.49) family.

It localises to the cell membrane. The polypeptide is Putative ion-transport protein YfeO (Escherichia coli O139:H28 (strain E24377A / ETEC)).